The chain runs to 302 residues: tRNA dimethylallyltransferase 2 (302 aa).

Residue 6–13 coordinates ATP; the sequence is GPTACGKT. 8–13 contacts substrate; sequence TACGKT. Interaction with substrate tRNA stretches follow at residues 31–34 and 154–158; these read DSRQ and QRAIR.

The protein belongs to the IPP transferase family. Monomer. It depends on Mg(2+) as a cofactor.

The catalysed reaction is adenosine(37) in tRNA + dimethylallyl diphosphate = N(6)-dimethylallyladenosine(37) in tRNA + diphosphate. Functionally, catalyzes the transfer of a dimethylallyl group onto the adenine at position 37 in tRNAs that read codons beginning with uridine, leading to the formation of N6-(dimethylallyl)adenosine (i(6)A). The polypeptide is tRNA dimethylallyltransferase 2 (Porphyromonas gingivalis (strain ATCC BAA-308 / W83)).